Reading from the N-terminus, the 65-residue chain is Large ribosomal subunit protein bL35 (65 aa).

Belongs to the bacterial ribosomal protein bL35 family.

The sequence is that of Large ribosomal subunit protein bL35 from Buchnera aphidicola subsp. Acyrthosiphon pisum (strain 5A).